The chain runs to 179 residues: uncharacterized protein (179 aa).

Positions Met1–Ala27 are cleaved as a signal peptide. Cys43 and Cys83 are joined by a disulfide.

It belongs to the fimbrial protein family.

It localises to the fimbrium. Part of the yfcOPQRSUV fimbrial operon. Could contribute to adhesion to various surfaces in specific environmental niches. Increases adhesion to eukaryotic T24 bladder epithelial cells in the absence of fim genes. This is an uncharacterized protein from Escherichia coli (strain K12).